The primary structure comprises 126 residues: Fluoride-specific ion channel FluC (126 aa).

Transmembrane regions (helical) follow at residues Ser-4–Leu-24, Gly-36–Ala-56, Leu-68–Val-88, and Ala-99–Ala-119. Residues Gly-75 and Thr-78 each contribute to the Na(+) site.

Belongs to the fluoride channel Fluc/FEX (TC 1.A.43) family.

The protein localises to the cell inner membrane. It carries out the reaction fluoride(in) = fluoride(out). With respect to regulation, na(+) is not transported, but it plays an essential structural role and its presence is essential for fluoride channel function. Its function is as follows. Fluoride-specific ion channel. Important for reducing fluoride concentration in the cell, thus reducing its toxicity. The polypeptide is Fluoride-specific ion channel FluC (Chromobacterium violaceum (strain ATCC 12472 / DSM 30191 / JCM 1249 / CCUG 213 / NBRC 12614 / NCIMB 9131 / NCTC 9757 / MK)).